The primary structure comprises 1385 residues: L-2-aminoadipate reductase large subunit (1385 aa).

One can recognise a Carrier domain in the interval 843–920; sequence SSFSPLEQEI…ELAKEISRVR (78 aa). Serine 880 carries the O-(pantetheine 4'-phosphoryl)serine modification.

This sequence belongs to the ATP-dependent AMP-binding enzyme family. As to quaternary structure, heterodimer of an alpha and a beta subunit. Pantetheine 4'-phosphate serves as cofactor.

The enzyme catalyses (S)-2-amino-6-oxohexanoate + NADP(+) + H2O = L-2-aminoadipate + NADPH + 2 H(+). The catalysed reaction is (S)-2-amino-6-oxohexanoate + NAD(+) + H2O = L-2-aminoadipate + NADH + 2 H(+). It carries out the reaction (S)-2-amino-6-oxohexanoate + AMP + diphosphate + NADP(+) = L-2-aminoadipate + ATP + NADPH + H(+). The protein operates within amino-acid biosynthesis; L-lysine biosynthesis via AAA pathway; L-lysine from L-alpha-aminoadipate (fungal route): step 1/3. Its function is as follows. Catalyzes the activation of alpha-aminoadipate by ATP-dependent adenylation and the reduction of activated alpha-aminoadipate by NADPH. The activated alpha-aminoadipate is bound to the phosphopantheinyl group of the enzyme itself before it is reduced to (S)-2-amino-6-oxohexanoate. In Eremothecium gossypii (strain ATCC 10895 / CBS 109.51 / FGSC 9923 / NRRL Y-1056) (Yeast), this protein is L-2-aminoadipate reductase large subunit (LYS2).